The following is a 218-amino-acid chain: Protein-L-isoaspartate O-methyltransferase (218 aa).

Serine 52 is a catalytic residue.

Belongs to the methyltransferase superfamily. L-isoaspartyl/D-aspartyl protein methyltransferase family.

Its subcellular location is the cytoplasm. The enzyme catalyses [protein]-L-isoaspartate + S-adenosyl-L-methionine = [protein]-L-isoaspartate alpha-methyl ester + S-adenosyl-L-homocysteine. Catalyzes the methyl esterification of L-isoaspartyl residues in peptides and proteins that result from spontaneous decomposition of normal L-aspartyl and L-asparaginyl residues. It plays a role in the repair and/or degradation of damaged proteins. The sequence is that of Protein-L-isoaspartate O-methyltransferase from Rhodopseudomonas palustris (strain ATCC BAA-98 / CGA009).